The primary structure comprises 588 residues: Aspartate--tRNA ligase (588 aa).

Residue Glu-171 participates in L-aspartate binding. The interval 195–198 (QLFK) is aspartate. Residue Arg-217 coordinates L-aspartate. ATP is bound by residues 217–219 (RDE) and Gln-226. Position 447 (His-447) interacts with L-aspartate. Glu-481 contacts ATP. An L-aspartate-binding site is contributed by Arg-488. 533–536 (GLDR) is a binding site for ATP.

The protein belongs to the class-II aminoacyl-tRNA synthetase family. Type 1 subfamily. As to quaternary structure, homodimer.

Its subcellular location is the cytoplasm. The catalysed reaction is tRNA(Asp) + L-aspartate + ATP = L-aspartyl-tRNA(Asp) + AMP + diphosphate. Functionally, catalyzes the attachment of L-aspartate to tRNA(Asp) in a two-step reaction: L-aspartate is first activated by ATP to form Asp-AMP and then transferred to the acceptor end of tRNA(Asp). This Aeromonas salmonicida (strain A449) protein is Aspartate--tRNA ligase.